The chain runs to 275 residues: N-(5'-phosphoribosyl)anthranilate isomerase 2, chloroplastic (275 aa).

Residues 1–32 (MSTGISTDLHVHFGALNFSKTYKSGLSNRTVS) constitute a chloroplast transit peptide.

Belongs to the TrpF family. In terms of tissue distribution, expressed in roots and shoots.

It is found in the plastid. The protein localises to the chloroplast. The enzyme catalyses N-(5-phospho-beta-D-ribosyl)anthranilate = 1-(2-carboxyphenylamino)-1-deoxy-D-ribulose 5-phosphate. It participates in amino-acid biosynthesis; L-tryptophan biosynthesis; L-tryptophan from chorismate: step 3/5. This Arabidopsis thaliana (Mouse-ear cress) protein is N-(5'-phosphoribosyl)anthranilate isomerase 2, chloroplastic (PAI2).